We begin with the raw amino-acid sequence, 419 residues long: UDP-N-acetylglucosamine 1-carboxyvinyltransferase (419 aa).

Position 22–23 (22–23 (KN)) interacts with phosphoenolpyruvate. Arg-95 provides a ligand contact to UDP-N-acetyl-alpha-D-glucosamine. Catalysis depends on Cys-119, which acts as the Proton donor. Cys-119 is modified (2-(S-cysteinyl)pyruvic acid O-phosphothioketal). UDP-N-acetyl-alpha-D-glucosamine contacts are provided by residues 164–167 (KVSV), Asp-308, and Ile-330.

This sequence belongs to the EPSP synthase family. MurA subfamily.

The protein localises to the cytoplasm. It carries out the reaction phosphoenolpyruvate + UDP-N-acetyl-alpha-D-glucosamine = UDP-N-acetyl-3-O-(1-carboxyvinyl)-alpha-D-glucosamine + phosphate. It participates in cell wall biogenesis; peptidoglycan biosynthesis. In terms of biological role, cell wall formation. Adds enolpyruvyl to UDP-N-acetylglucosamine. This Rickettsia africae (strain ESF-5) protein is UDP-N-acetylglucosamine 1-carboxyvinyltransferase.